The chain runs to 320 residues: Protein PXR1 (320 aa).

A compositionally biased stretch (basic residues) spans 1–11 (MGLAGPRKRTK). Residues 1–24 (MGLAGPRKRTKISHDPNNTAWSRS) form a disordered region. Positions 15–24 (DPNNTAWSRS) are enriched in polar residues. Residues 25–79 (TSGYGHKIMSAQGWTPGSFLGASNAAHADHFTAGSAGHIRVILKDDNLGLGAKLR) enclose the G-patch domain. Positions 152–298 (GEEVQTPQIS…MGRQFTRGRH (147 aa)) are disordered. Residues 169–182 (KRPKKARKKEKRRA) are compositionally biased toward basic residues. Composition is skewed to basic and acidic residues over residues 203 to 214 (RKENKEKKKSSD), 243 to 256 (KDPE…HDDS), and 269 to 288 (QESR…EHRP).

This sequence belongs to the PINX1 family.

It localises to the nucleus. The protein resides in the nucleolus. Its function is as follows. Involved in rRNA-processing at A0, A1 and A2 sites and negatively regulates telomerase. The protein is Protein PXR1 (PXR1) of Ajellomyces capsulatus (strain NAm1 / WU24) (Darling's disease fungus).